A 494-amino-acid polypeptide reads, in one-letter code: MDETIWLIISTVIIVLGIAKFLLGKSSSSSLSTMEWPVGPKKLPIIGNLHQLGGDVFHVVLANLAKVYGSVFTIWVGSWRPMIIVSDIDKAWEVLVNKSSDYSARDMPDITKIISANWKNISCSDSGPFWHNLRKGLQGVALTPLNVASQYHLQERDMKNLINSMYKDASRKNGILKPLDYLKEETVRLLSRLIFGQDFQDEKLVVGMHHALDDLVRISGYASLADAFKFCENLPSHKKSIREVHEVKKRVENLIRPHIVSNPPTNTYLYFLKTQDFNEDIIISAILEVYDLGVDSTASTTVWALTFLVREQEIQEKLYREIVNVTGGKRSVKVEDVNKMPYLQAVMKETMRMKPIAPMAIPHKTSKDTSLMGKKINKGSVIMVNLYAIHHNPKVFPEPYKFMPERFLKDVNSDESLGNIKTMESSLLAFSAGMRICAGMELGKLQLAFGLASLVHEFKWSCSVDGKLPDLSEDHCFILLMKNPLEAKITCRIH.

Residues Thr4 to Gly24 form a helical membrane-spanning segment. Cys437 contributes to the heme binding site.

It belongs to the cytochrome P450 family. Requires heme as cofactor. As to expression, expressed in roots and at lower levels in stems, leaves and plantlets.

It localises to the endoplasmic reticulum membrane. The enzyme catalyses (S)-scoulerine + reduced [NADPH--hemoprotein reductase] + O2 = (S)-cheilanthifoline + oxidized [NADPH--hemoprotein reductase] + 2 H2O + H(+). In terms of biological role, methylenedioxy bridge-forming cytochrome P450 involved in the biosynthesis of isoquinoline alkaloids. Converts (S)-scoulerine into (S)-cheilanthifoline, a precursor of sanguinarine. Catalyzes an oxidative reaction that does not incorporate oxygen into the product. The chain is Cheilanthifoline synthase from Argemone mexicana (Mexican prickly poppy).